We begin with the raw amino-acid sequence, 715 residues long: Fatty acid oxidation complex subunit alpha (715 aa).

The enoyl-CoA hydratase stretch occupies residues 1 to 190 (MTTTSAFMLN…KAGLVDDVVP (190 aa)). The 3-hydroxyacyl-CoA dehydrogenase stretch occupies residues 306 to 715 (GPLNSVGILG…WTNGETDQGN (410 aa)).

It in the N-terminal section; belongs to the enoyl-CoA hydratase/isomerase family. In the central section; belongs to the 3-hydroxyacyl-CoA dehydrogenase family. As to quaternary structure, heterotetramer of two alpha chains (FadJ) and two beta chains (FadI).

It localises to the cytoplasm. The catalysed reaction is a (3S)-3-hydroxyacyl-CoA = a (2E)-enoyl-CoA + H2O. It carries out the reaction a 4-saturated-(3S)-3-hydroxyacyl-CoA = a (3E)-enoyl-CoA + H2O. It catalyses the reaction a (3S)-3-hydroxyacyl-CoA + NAD(+) = a 3-oxoacyl-CoA + NADH + H(+). The enzyme catalyses (3S)-3-hydroxybutanoyl-CoA = (3R)-3-hydroxybutanoyl-CoA. It functions in the pathway lipid metabolism; fatty acid beta-oxidation. Its function is as follows. Catalyzes the formation of a hydroxyacyl-CoA by addition of water on enoyl-CoA. Also exhibits 3-hydroxyacyl-CoA epimerase and 3-hydroxyacyl-CoA dehydrogenase activities. The chain is Fatty acid oxidation complex subunit alpha from Salmonella paratyphi B (strain ATCC BAA-1250 / SPB7).